The sequence spans 120 residues: Putative cysteine proteinase inhibitor 11 (120 aa).

Positions 1-24 (MARHPGLLLILLAAVAAVATTSRA) are cleaved as a signal peptide. The short motif at 73 to 77 (QVVQG) is the Secondary area of contact element.

The protein belongs to the cystatin family. Phytocystatin subfamily.

It localises to the secreted. Its function is as follows. Specific inhibitor of cysteine proteinases. Probably involved in the regulation of endogenous processes and in defense against pests and pathogens. The chain is Putative cysteine proteinase inhibitor 11 from Oryza sativa subsp. japonica (Rice).